A 618-amino-acid polypeptide reads, in one-letter code: Glucose starvation modulator protein 1 (618 aa).

The segment at residues 20–48 is a DNA-binding region (zn(2)-C6 fungal-type); it reads CEFCHTKHIQCDVGRPCQNCLKRNIGKFC. A disordered region spans residues 325-353; the sequence is ANANTQPSHNAKLESECDSSSHSDADLEK. Over residues 335-353 the composition is skewed to basic and acidic residues; sequence AKLESECDSSSHSDADLEK. Positions 466–538 constitute a PAS domain; the sequence is LLDLENMAKL…QIFNELLAFG (73 aa).

Belongs to the ERT1/acuK family.

Its subcellular location is the nucleus. Its function is as follows. Transcription factor which regulates nonfermentable carbon utilization. Binds specifically to 5'-CGGN(8)CGG-3' and 5'-CGGN(9)CGG-3' sequences in the promoter region. The protein is Glucose starvation modulator protein 1 (GSM1) of Saccharomyces cerevisiae (strain JAY291) (Baker's yeast).